Here is a 122-residue protein sequence, read N- to C-terminus: Big defensin (122 aa).

An N-terminal signal peptide occupies residues 1–28 (MTRPSLVRCYSLFFTALIVMAIICPAWS). Residues 29-34 (EEIPKS) constitute a propeptide that is removed on maturation. Intrachain disulfides connect C88–C119, C95–C114, and C99–C120.

This sequence belongs to the big defensin family. In terms of tissue distribution, expressed in hemocytes.

The protein resides in the secreted. Functionally, significantly inhibits the growth of Gram-negative and Gram-positive bacteria and fungi in vitro. The chain is Big defensin from Argopecten irradians (Bay scallop).